The following is a 506-amino-acid chain: Maturase K (506 aa).

It belongs to the intron maturase 2 family. MatK subfamily.

It is found in the plastid. The protein resides in the chloroplast. Usually encoded in the trnK tRNA gene intron. Probably assists in splicing its own and other chloroplast group II introns. The polypeptide is Maturase K (Artanema fimbriatum).